The sequence spans 238 residues: MAGHSKWANTKHRKERADHKKGKIFSRTIKELISAVKMGGPDPKSNARLRMIIQKAKDQNIPNENIERNLKKASSADQKNYEEVTYELYGFGGVGIIVEAMTDNKNRTASDMRVAVNKRGGALVEPGSVLYNFSRKGACYVPKHSIDEASLLTHMIDCGGEDLDSDDEEFFLVLCEPTDLASVKEALLAKGVTCSEERLIYVPLRLVDCDEETGKSNLALIEWLENINDVDDVYHNMA.

Residues 1-21 (MAGHSKWANTKHRKERADHKK) are disordered. Over residues 9 to 21 (NTKHRKERADHKK) the composition is skewed to basic residues.

The protein belongs to the TACO1 family.

The protein localises to the cytoplasm. The protein is Probable transcriptional regulatory protein CT_457 of Chlamydia trachomatis serovar D (strain ATCC VR-885 / DSM 19411 / UW-3/Cx).